Here is a 523-residue protein sequence, read N- to C-terminus: Cyclin-dependent kinase 17 (523 aa).

The residue at position 9 (Ser-9) is a Phosphoserine. The tract at residues 30 to 55 (TIEESSSKDNEPIVKNGRPPTSHSVH) is disordered. Ser-80, Ser-92, and Ser-105 each carry phosphoserine. Residues 103-123 (MGSDGESDQASGTSSDEVQSP) form a disordered region. The segment covering 110 to 123 (DQASGTSSDEVQSP) has biased composition (polar residues). Phosphoserine is present on residues Ser-137, Ser-146, Ser-165, and Ser-180. The region spanning 192–473 (YIKLEKLGEG…AEEAMKHVYF (282 aa)) is the Protein kinase domain. Residues 198–206 (LGEGTYATV) and Lys-221 contribute to the ATP site. Asp-313 serves as the catalytic Proton acceptor. The segment at 501–523 (PGFRNSSYPETGHGKNRRQSMLF) is disordered. Positions 514-523 (GKNRRQSMLF) are enriched in basic residues.

It belongs to the protein kinase superfamily. CMGC Ser/Thr protein kinase family. CDC2/CDKX subfamily. In terms of assembly, found in a complex containing CABLES1, CDK16 and TDRD7. Interacts with TDRD7.

It carries out the reaction L-seryl-[protein] + ATP = O-phospho-L-seryl-[protein] + ADP + H(+). The catalysed reaction is L-threonyl-[protein] + ATP = O-phospho-L-threonyl-[protein] + ADP + H(+). In terms of biological role, may play a role in terminally differentiated neurons. Has a Ser/Thr-phosphorylating activity for histone H1. This is Cyclin-dependent kinase 17 (Cdk17) from Mus musculus (Mouse).